The primary structure comprises 103 residues: Large ribosomal subunit protein mL63 (103 aa).

It belongs to the mitochondrion-specific ribosomal protein mL63 family.

The protein localises to the mitochondrion. This Danio rerio (Zebrafish) protein is Large ribosomal subunit protein mL63 (mrpl57).